Consider the following 397-residue polypeptide: Mediator of RNA polymerase II transcription subunit 3 (397 aa).

Met-1 is subject to N-acetylmethionine. Over residues 147 to 165 the composition is skewed to low complexity; sequence ASTPTTTATPHANPITHAH. Disordered stretches follow at residues 147 to 227, 288 to 327, and 346 to 370; these read ASTP…AQAQ, SMGA…QSQL, and FQQQ…MGMN. Composition is skewed to polar residues over residues 166 to 178 and 189 to 202; these read SLSN…TMQH and SGST…HNST. A compositionally biased stretch (basic residues) spans 211–223; sequence KKPRKPRQTKKAK. Polar residues predominate over residues 290–303; sequence GAQNQGGQVSMSQF. Residues 309–322 show a composition bias toward low complexity; that stretch reads GSNPNTNTNSNNTP.

It belongs to the mediator complex subunit 3 family. As to quaternary structure, component of the Mediator complex, which is composed of at least 21 subunits that form three structurally distinct submodules. The Mediator head module contains MED6, MED8, MED11, SRB4/MED17, SRB5/MED18, ROX3/MED19, SRB2/MED20 and SRB6/MED22, the middle module contains MED1, MED4, NUT1/MED5, MED7, CSE2/MED9, NUT2/MED10, SRB7/MED21 and SOH1/MED31, and the tail module contains MED2, PGD1/MED3, RGR1/MED14, GAL11/MED15 and SIN4/MED16. The head and the middle modules interact directly with RNA polymerase II, whereas the elongated tail module interacts with gene-specific regulatory proteins. PGD1/MED3 interacts directly with the CYC8-TUP1 corepressor proteins.

The protein resides in the nucleus. Component of the Mediator complex, a coactivator involved in the regulated transcription of nearly all RNA polymerase II-dependent genes. Mediator functions as a bridge to convey information from gene-specific regulatory proteins to the basal RNA polymerase II transcription machinery. The Mediator complex, having a compact conformation in its free form, is recruited to promoters by direct interactions with regulatory proteins and serves for the assembly of a functional preinitiation complex with RNA polymerase II and the general transcription factors. The Mediator complex unfolds to an extended conformation and partially surrounds RNA polymerase II, specifically interacting with the unphosphorylated form of the C-terminal domain (CTD) of RNA polymerase II. The Mediator complex dissociates from the RNA polymerase II holoenzyme and stays at the promoter when transcriptional elongation begins. PGD1/MED3 is also involved in direct repeat recombination. The chain is Mediator of RNA polymerase II transcription subunit 3 (PGD1) from Saccharomyces cerevisiae (strain ATCC 204508 / S288c) (Baker's yeast).